The following is a 380-amino-acid chain: RNA-binding motif protein, Y chromosome, family 9 (380 aa).

An RRM domain is found at 8–86 (GKIFIGGLNI…KRIKVKQARR (79 aa)). Disordered stretches follow at residues 82–226 (KQAR…STSR) and 279–358 (HEAP…YSAS). Residues 166–178 (RSATSAQTRSNTG) show a composition bias toward polar residues. Basic and acidic residues-rich tracts occupy residues 180 to 190 (RGREPHRREIS) and 333 to 351 (IDRE…HSPK).

Testis-specific.

Its subcellular location is the nucleus. RNA-binding protein which may be involved in spermatogenesis. May be required for sperm development, possibly by participating in pre-mRNA splicing in the testis. In Mus musculus (Mouse), this protein is RNA-binding motif protein, Y chromosome, family 9.